We begin with the raw amino-acid sequence, 357 residues long: Cyclin-Y (357 aa).

Polar residues predominate over residues 1-13 (MGNSSCCLRTRSS). Residues 1–23 (MGNSSCCLRTRSSSGEDKSYNND) are disordered. In terms of domain architecture, Cyclin N-terminal spans 186-284 (PDHRNIYRFV…RFLECLDFNI (99 aa)).

It belongs to the cyclin family. Interacts with pct-1; the interaction is required to activate pct-1.

It is found in the cytoplasm. It localises to the cell projection. Its subcellular location is the dendrite. The protein localises to the axon. Its function is as follows. In association with pct-1, regulates the trafficking of synaptic vesicle precursors in DA motor neurons by promoting anterograde trafficking to the axon and preventing dynein-dependent trafficking to the dendrite. May also regulate synaptic vesicle trafficking in DD motor neurons and in RIA interneurons. Involved in synapse formation during DD motor neuron remodeling by disassembling ventral presynaptic structures. May activate cdk-5. The polypeptide is Cyclin-Y (Caenorhabditis elegans).